We begin with the raw amino-acid sequence, 281 residues long: Hexaprenyl pyrophosphate synthase (281 aa).

Isopentenyl diphosphate-binding residues include Lys-42, Arg-45, and His-74. Mg(2+) contacts are provided by Asp-81 and Asp-85. An isopentenyl diphosphate-binding site is contributed by Arg-91.

Belongs to the FPP/GGPP synthase family. As to quaternary structure, homodimer. The cofactor is Mg(2+).

The enzyme catalyses 2 isopentenyl diphosphate + (2E,6E,10E)-geranylgeranyl diphosphate = all-trans-hexaprenyl diphosphate + 2 diphosphate. Functionally, catalyzes consecutive E-type condensation of two isopentenyl pyrophosphate (IPP) molecules with an allylic substrate such as geranylgeranyl diphosphate (GGPP), farnesyl diphosphate (FPP) or geranyl diphosphate (GPP) to yield the medium-chain product trans-C30-hexaprenyl pyrophosphate (HexPP). GGPP is the physiological substrate. This Saccharolobus solfataricus (strain ATCC 35092 / DSM 1617 / JCM 11322 / P2) (Sulfolobus solfataricus) protein is Hexaprenyl pyrophosphate synthase (gdS-2).